A 257-amino-acid chain; its full sequence is MEFQYRGNKTVLSNCYQNPPLRASRPLYINPANRSEATVYLVETSGGIVEGDHNVFDIDIKEGADVCLIPQSATKIYPSYNGIWSSQDMDITIGPKASLSFKTEAVIPFEQARFNSKTVIQMTSDSTFLWGDILSPGRVARGEVFEYTDVRTNFQVWMDDECLIYDPLLISKDNMGLKKMGMLEDHLFIGSMWFVTPTIEEFDIRELNERLQESPHSKASASMLEGKAVNVRWLASDLVDLKKEMNRIWDEFANYIV.

This sequence belongs to the UreD family. UreD, UreF and UreG form a complex that acts as a GTP-hydrolysis-dependent molecular chaperone, activating the urease apoprotein by helping to assemble the nickel containing metallocenter of UreC. The UreE protein probably delivers the nickel.

Its subcellular location is the cytoplasm. Functionally, required for maturation of urease via the functional incorporation of the urease nickel metallocenter. The chain is Urease accessory protein UreD from Sporosarcina pasteurii (Bacillus pasteurii).